The chain runs to 601 residues: Probable cytochrome P450 525A1 (601 aa).

The helical transmembrane segment at 12–32 (ISYFLTCSIFGFILWILTEQI) threads the bilayer. Positions 205 to 253 (NNNNNNNNNNNNNNNNNNNNNNNNNNNNNNNNNNNNNNNNNNNNNNNNN) are disordered. C544 serves as a coordination point for heme.

It belongs to the cytochrome P450 family. Heme serves as cofactor.

It localises to the membrane. In Dictyostelium discoideum (Social amoeba), this protein is Probable cytochrome P450 525A1 (cyp525A1).